The following is a 678-amino-acid chain: Protein CASP (678 aa).

Residues 1-619 (MAANVGSMFQ…LVLSNKMART (619 aa)) are Cytoplasmic-facing. Coiled coils occupy residues 67-450 (LLKS…QDLS) and 502-556 (LSII…FLQS). Ser586 is modified (phosphoserine). Residues 620 to 640 (IGFFYTLFLHCLVFLVLYKLA) traverse the membrane as a helical; Anchor for type IV membrane protein segment. The Lumenal portion of the chain corresponds to 641 to 678 (WSESMERDCATFCAKKFADHLHKFHENDNGAAAGDLWQ).

Belongs to the CASP family. As to quaternary structure, homodimer; disulfide-linked. Interacts with GOLGA5.

It localises to the golgi apparatus membrane. May be involved in intra-Golgi retrograde transport. The sequence is that of Protein CASP (CUX1) from Homo sapiens (Human).